We begin with the raw amino-acid sequence, 154 residues long: uncharacterized protein (154 aa).

Residues 14 to 146 enclose the HTH marR-type domain; the sequence is AMNLYRVFAR…LIVLLKKAGI (133 aa). A DNA-binding region (H-T-H motif) is located at residues 60 to 83; the sequence is LQQIGSRLLLVSGNVTYVIDKLER.

This is an uncharacterized protein from Bacillus subtilis (strain 168).